Consider the following 152-residue polypeptide: Xanthine-guanine phosphoribosyltransferase (152 aa).

5-phospho-alpha-D-ribose 1-diphosphate is bound by residues arginine 37–glycine 38, arginine 69, and aspartate 88–threonine 96. Arginine 69 is a GMP binding site. Aspartate 89 lines the Mg(2+) pocket. The guanine site is built by aspartate 92 and isoleucine 135. Xanthine is bound by residues aspartate 92 and isoleucine 135. Residues aspartate 92–threonine 96 and tryptophan 134–isoleucine 135 each bind GMP.

The protein belongs to the purine/pyrimidine phosphoribosyltransferase family. XGPT subfamily. Homotetramer. Mg(2+) is required as a cofactor.

The protein localises to the cell inner membrane. The enzyme catalyses GMP + diphosphate = guanine + 5-phospho-alpha-D-ribose 1-diphosphate. The catalysed reaction is XMP + diphosphate = xanthine + 5-phospho-alpha-D-ribose 1-diphosphate. It carries out the reaction IMP + diphosphate = hypoxanthine + 5-phospho-alpha-D-ribose 1-diphosphate. It participates in purine metabolism; GMP biosynthesis via salvage pathway; GMP from guanine: step 1/1. It functions in the pathway purine metabolism; XMP biosynthesis via salvage pathway; XMP from xanthine: step 1/1. Purine salvage pathway enzyme that catalyzes the transfer of the ribosyl-5-phosphate group from 5-phospho-alpha-D-ribose 1-diphosphate (PRPP) to the N9 position of the 6-oxopurines guanine and xanthine to form the corresponding ribonucleotides GMP (guanosine 5'-monophosphate) and XMP (xanthosine 5'-monophosphate), with the release of PPi. To a lesser extent, also acts on hypoxanthine. This Sodalis glossinidius (strain morsitans) protein is Xanthine-guanine phosphoribosyltransferase.